Reading from the N-terminus, the 120-residue chain is U13-lycotoxin-Ls1e (120 aa).

The N-terminal stretch at 1 to 16 (MKILFVLISILYAVYC) is a signal peptide. Residues 17–54 (FSSEEDVDSAYLANELEPVEDINSEQYAALEPKEEQER) constitute a propeptide that is removed on maturation. 4 cysteine pairs are disulfide-bonded: cysteine 56–cysteine 70, cysteine 63–cysteine 76, cysteine 69–cysteine 87, and cysteine 78–cysteine 85. Residues 56–95 (CAGMGRDCKDDCDCCLNIATCNCWFGRYFCSCTFGDYQTC) form the Agouti domain.

Belongs to the neurotoxin 05 (agouti) family. Contains 6 disulfide bonds. In terms of tissue distribution, expressed by the venom gland.

The protein resides in the secreted. The protein is U13-lycotoxin-Ls1e of Lycosa singoriensis (Wolf spider).